The sequence spans 77 residues: MSTVEERVKKIVCEQLGVKEGDVQLTSKFVEDLGADSLDTVELVMALEEEFETEIPDEEAEKITTVQDAIDYILANQ.

The region spanning 2–77 (STVEERVKKI…DAIDYILANQ (76 aa)) is the Carrier domain. Position 37 is an O-(pantetheine 4'-phosphoryl)serine (Ser37).

This sequence belongs to the acyl carrier protein (ACP) family. Post-translationally, 4'-phosphopantetheine is transferred from CoA to a specific serine of apo-ACP by AcpS. This modification is essential for activity because fatty acids are bound in thioester linkage to the sulfhydryl of the prosthetic group.

It is found in the cytoplasm. It participates in lipid metabolism; fatty acid biosynthesis. Its function is as follows. Carrier of the growing fatty acid chain in fatty acid biosynthesis. This is Acyl carrier protein from Hahella chejuensis (strain KCTC 2396).